Reading from the N-terminus, the 523-residue chain is Beta-glucosidase 31 (523 aa).

The signal sequence occupies residues 1–22 (MTPARVVFICCVVLLAAAAAAA). A beta-D-glucoside-binding positions include Gln49, His149, and 194–195 (NE). Glu195 serves as the catalytic Proton donor. An intrachain disulfide couples Cys214 to Cys223. Asn227 carries N-linked (GlcNAc...) asparagine glycosylation. A beta-D-glucoside contacts are provided by Tyr339 and Glu413. Glu413 functions as the Nucleophile in the catalytic mechanism. N-linked (GlcNAc...) asparagine glycosylation is present at Asn450. A beta-D-glucoside contacts are provided by residues Trp460, 467-468 (EY), and Phe476.

It belongs to the glycosyl hydrolase 1 family.

The enzyme catalyses Hydrolysis of terminal, non-reducing beta-D-glucosyl residues with release of beta-D-glucose.. The chain is Beta-glucosidase 31 (BGLU31) from Oryza sativa subsp. japonica (Rice).